Consider the following 31-residue polypeptide: Photosystem II reaction center protein M (31 aa).

Residues 5-25 (ILALMATALFIIIPTAFLIIL) form a helical membrane-spanning segment.

It belongs to the PsbM family. As to quaternary structure, PSII is composed of 1 copy each of membrane proteins PsbA, PsbB, PsbC, PsbD, PsbE, PsbF, PsbH, PsbI, PsbJ, PsbK, PsbL, PsbM, PsbT, PsbX, PsbY, PsbZ, Psb30/Ycf12, at least 3 peripheral proteins of the oxygen-evolving complex and a large number of cofactors. It forms dimeric complexes.

The protein localises to the plastid. It localises to the chloroplast thylakoid membrane. One of the components of the core complex of photosystem II (PSII). PSII is a light-driven water:plastoquinone oxidoreductase that uses light energy to abstract electrons from H(2)O, generating O(2) and a proton gradient subsequently used for ATP formation. It consists of a core antenna complex that captures photons, and an electron transfer chain that converts photonic excitation into a charge separation. This subunit is found at the monomer-monomer interface. This chain is Photosystem II reaction center protein M, found in Mesostigma viride (Green alga).